A 488-amino-acid chain; its full sequence is Palmitoleoyl-protein carboxylesterase notum1' (488 aa).

A signal peptide spans 1–19 (MAGTLCVTLLLLLSTIAVG). The N-linked (GlcNAc...) asparagine glycan is linked to Asn-90. Active-site charge relay system residues include Ser-226, Asp-334, and His-383.

This sequence belongs to the pectinacetylesterase family. Notum subfamily. As to expression, expressed in the egg and through cleavage to gastrulation stages. Enriched in the animal (prospective ectoderm) and dorsal regions in early gastrula. Shows a dynamic expression during embryogenesis, in particular during neural induction and antero-posterior (AP) patterning.

The protein resides in the secreted. It catalyses the reaction [Wnt protein]-O-(9Z)-hexadecenoyl-L-serine + H2O = [Wnt protein]-L-serine + (9Z)-hexadecenoate + H(+). Carboxylesterase that acts as a key negative regulator of the Wnt signaling pathway by specifically mediating depalmitoleoylation of WNT proteins. Serine palmitoleoylation of WNT proteins is required for efficient binding to frizzled receptors. Functions in the prospective ectoderm and is required for neural induction. The polypeptide is Palmitoleoyl-protein carboxylesterase notum1' (Xenopus laevis (African clawed frog)).